Here is a 384-residue protein sequence, read N- to C-terminus: MAKHLFTSESVSEGHPDKIADQISDAVLDAILEQDPKARVACETYVKTGMVMVGGEVTTSAWVDIEEITRETVREIGYVHSDMGFDANSCAVLNTIGKQSPDINQGVDKADPKEQGAGDQGIMFGYATNETPILMPAPITYSHLLVQKQAEVRKSGKLDFLRPDAKSQVTFQYDQGKIVGIDAVVLSTQHCDSVTTPDLREAVMEEIIKPVLPAEWLNKDTNFFINPTGRFVIGGPMGDCGLTGRKIIVDTYGGAARHGGGAFSGKDPSKVDRSAAYAARYVAKNIVAAGMADRCEIQLSYAIGVADPTSIMVETFGTEKVSHDIIIEAVRQNFDLRPYGLQEMLNLLQPIYKKTAAYGHFGREEFPWEATDKAAILRDFAGIK.

An ATP-binding site is contributed by His-15. Position 17 (Asp-17) interacts with Mg(2+). Glu-43 is a K(+) binding site. Residues Glu-56 and Gln-99 each contribute to the L-methionine site. Positions 99–109 (QSPDINQGVDK) are flexible loop. ATP contacts are provided by residues 164–166 (DAK), 230–231 (RF), Asp-239, 245–246 (RK), Ala-262, and Lys-266. Residue Asp-239 participates in L-methionine binding. An L-methionine-binding site is contributed by Lys-270.

It belongs to the AdoMet synthase family. As to quaternary structure, homotetramer; dimer of dimers. Requires Mg(2+) as cofactor. K(+) serves as cofactor.

The protein resides in the cytoplasm. The catalysed reaction is L-methionine + ATP + H2O = S-adenosyl-L-methionine + phosphate + diphosphate. It participates in amino-acid biosynthesis; S-adenosyl-L-methionine biosynthesis; S-adenosyl-L-methionine from L-methionine: step 1/1. Catalyzes the formation of S-adenosylmethionine (AdoMet) from methionine and ATP. The overall synthetic reaction is composed of two sequential steps, AdoMet formation and the subsequent tripolyphosphate hydrolysis which occurs prior to release of AdoMet from the enzyme. The sequence is that of S-adenosylmethionine synthase from Aliivibrio fischeri (strain ATCC 700601 / ES114) (Vibrio fischeri).